The sequence spans 127 residues: Aspartate 1-decarboxylase (127 aa).

The active-site Schiff-base intermediate with substrate; via pyruvic acid is the serine 25. Position 25 is a pyruvic acid (Ser) (serine 25). Substrate is bound at residue threonine 57. Tyrosine 58 functions as the Proton donor in the catalytic mechanism. 73–75 (GSA) contributes to the substrate binding site.

The protein belongs to the PanD family. As to quaternary structure, heterooctamer of four alpha and four beta subunits. Requires pyruvate as cofactor. In terms of processing, is synthesized initially as an inactive proenzyme, which is activated by self-cleavage at a specific serine bond to produce a beta-subunit with a hydroxyl group at its C-terminus and an alpha-subunit with a pyruvoyl group at its N-terminus.

It is found in the cytoplasm. It carries out the reaction L-aspartate + H(+) = beta-alanine + CO2. Its pathway is cofactor biosynthesis; (R)-pantothenate biosynthesis; beta-alanine from L-aspartate: step 1/1. In terms of biological role, catalyzes the pyruvoyl-dependent decarboxylation of aspartate to produce beta-alanine. This is Aspartate 1-decarboxylase from Laribacter hongkongensis (strain HLHK9).